Consider the following 332-residue polypeptide: Anthranilate phosphoribosyltransferase (332 aa).

5-phospho-alpha-D-ribose 1-diphosphate contacts are provided by residues glycine 78, 81-82, threonine 86, 88-91, 106-114, and alanine 118; these read GD, NVST, and KHGNRAASS. Glycine 78 is a binding site for anthranilate. Serine 90 contacts Mg(2+). Position 109 (asparagine 109) interacts with anthranilate. Arginine 164 serves as a coordination point for anthranilate. Mg(2+)-binding residues include aspartate 223 and glutamate 224.

This sequence belongs to the anthranilate phosphoribosyltransferase family. Homodimer. Mg(2+) serves as cofactor.

It catalyses the reaction N-(5-phospho-beta-D-ribosyl)anthranilate + diphosphate = 5-phospho-alpha-D-ribose 1-diphosphate + anthranilate. Its pathway is amino-acid biosynthesis; L-tryptophan biosynthesis; L-tryptophan from chorismate: step 2/5. Catalyzes the transfer of the phosphoribosyl group of 5-phosphorylribose-1-pyrophosphate (PRPP) to anthranilate to yield N-(5'-phosphoribosyl)-anthranilate (PRA). The chain is Anthranilate phosphoribosyltransferase from Sphingopyxis alaskensis (strain DSM 13593 / LMG 18877 / RB2256) (Sphingomonas alaskensis).